Reading from the N-terminus, the 55-residue chain is Neurotoxin BmP08 (55 aa).

The signal sequence occupies residues 1 to 23 (MKIFFAVLVILVLFSMLIWTAYG). 3 cysteine pairs are disulfide-bonded: Cys-30/Cys-45, Cys-36/Cys-50, and Cys-39/Cys-53.

In terms of tissue distribution, expressed by the venom gland.

The protein resides in the secreted. This Olivierus martensii (Manchurian scorpion) protein is Neurotoxin BmP08.